A 319-amino-acid chain; its full sequence is N-acetyllactosaminide alpha-1,3-galactosyltransferase-like 1 (319 aa).

The Cytoplasmic segment spans residues 1–6 (MQYKKE). A helical; Signal-anchor for type II membrane protein membrane pass occupies residues 7 to 26 (ALLLMLFAVLLALTQRFSYS). The Lumenal segment spans residues 27–319 (RTKDHLQKMY…IKHIKIAWKP (293 aa)). Residues asparagine 89 and asparagine 101 are each glycosylated (N-linked (GlcNAc...) asparagine). Substrate is bound by residues 97 to 102 (FATGNF), 188 to 190 (AVN), and 210 to 213 (HAWW). Catalysis depends on glutamate 278, which acts as the Nucleophile.

It belongs to the glycosyltransferase 6 family. The cofactor is Mn(2+).

It is found in the golgi apparatus. Its subcellular location is the golgi stack membrane. It carries out the reaction a beta-D-galactosyl-(1-&gt;4)-N-acetyl-beta-D-glucosaminyl derivative + UDP-alpha-D-galactose = an alpha-D-galactosyl-(1-&gt;3)-beta-D-galactosyl-(1-&gt;4)-N-acetyl-beta-D-glucosaminyl derivative + UDP + H(+). Its pathway is protein modification; protein glycosylation. Functionally, synthesizes the galactose-alpha(1,3)-galactose group by catalyzing the transfer of a galactose residue, with an alpha-1,3 linkage, on terminal lactosaminide (Gal-beta-1,4-GlcNAc-R) disaccharide borne by a glycoprotein or a glycolipid. The polypeptide is N-acetyllactosaminide alpha-1,3-galactosyltransferase-like 1 (Ggta1l1) (Mus musculus (Mouse)).